Reading from the N-terminus, the 221-residue chain is Large ribosomal subunit protein bL25 (221 aa).

Residues Ser174–Glu221 form a disordered region. The segment covering Glu184–Glu221 has biased composition (acidic residues).

Belongs to the bacterial ribosomal protein bL25 family. CTC subfamily. In terms of assembly, part of the 50S ribosomal subunit; part of the 5S rRNA/L5/L18/L25 subcomplex. Contacts the 5S rRNA. Binds to the 5S rRNA independently of L5 and L18.

Functionally, this is one of the proteins that binds to the 5S RNA in the ribosome where it forms part of the central protuberance. The chain is Large ribosomal subunit protein bL25 from Staphylococcus haemolyticus (strain JCSC1435).